Here is a 320-residue protein sequence, read N- to C-terminus: Foldase protein PrsA (320 aa).

An N-terminal signal peptide occupies residues 1–20 (MKMINKLIVPVTASALLLGA). Cys21 is lipidated: N-palmitoyl cysteine. Cys21 carries S-diacylglycerol cysteine lipidation. The PpiC domain occupies 139 to 245 (EDSKKASHIL…FGYHIIKADK (107 aa)). The segment at 159–198 (EGLDDKEAKQKAEEIQKEVSKDPSKFGEIAKKESMDTGSA) is disordered.

It belongs to the PrsA family.

It is found in the cell membrane. It catalyses the reaction [protein]-peptidylproline (omega=180) = [protein]-peptidylproline (omega=0). Plays a major role in protein secretion by helping the post-translocational extracellular folding of several secreted proteins. The chain is Foldase protein PrsA from Staphylococcus aureus (strain MRSA252).